The sequence spans 264 residues: MKSKLKLHGFNNLTKTLSFNIYDICYAETPQDQQAYVEYINSVYDAERLTRILTDVVDIIGANILNIARQDYDPQGASVTILISEQPVTPTESQIEESPGPLPETILAHLDKSHITVHTYPEIHPVDGIATFRVDIDVSTCGVISPLKALNYLIHKFESDIVTVDYRVRGFTRDVEGKKHFIDHEINSIQNYLSEDTRNGYQMTDVNVYQENLFHTKMLLKQFELDNYLFGDATSNLSPEQREQVTAKVKHEMLEIFYGRNVAV.

Ser-113 serves as the catalytic Schiff-base intermediate with substrate; via pyruvic acid. Ser-113 is modified (pyruvic acid (Ser); by autocatalysis). His-118 serves as the catalytic Proton acceptor; for processing activity. The active-site Proton donor; for catalytic activity is the Cys-141.

The protein belongs to the prokaryotic AdoMetDC family. Type 2 subfamily. As to quaternary structure, heterooctamer of four alpha and four beta chains arranged as a tetramer of alpha/beta heterodimers. Pyruvate is required as a cofactor. Is synthesized initially as an inactive proenzyme. Formation of the active enzyme involves a self-maturation process in which the active site pyruvoyl group is generated from an internal serine residue via an autocatalytic post-translational modification. Two non-identical subunits are generated from the proenzyme in this reaction, and the pyruvate is formed at the N-terminus of the alpha chain, which is derived from the carboxyl end of the proenzyme. The post-translation cleavage follows an unusual pathway, termed non-hydrolytic serinolysis, in which the side chain hydroxyl group of the serine supplies its oxygen atom to form the C-terminus of the beta chain, while the remainder of the serine residue undergoes an oxidative deamination to produce ammonia and the pyruvoyl group blocking the N-terminus of the alpha chain.

The enzyme catalyses S-adenosyl-L-methionine + H(+) = S-adenosyl 3-(methylsulfanyl)propylamine + CO2. Its pathway is amine and polyamine biosynthesis; S-adenosylmethioninamine biosynthesis; S-adenosylmethioninamine from S-adenosyl-L-methionine: step 1/1. Its function is as follows. Catalyzes the decarboxylation of S-adenosylmethionine to S-adenosylmethioninamine (dcAdoMet), the propylamine donor required for the synthesis of the polyamines spermine and spermidine from the diamine putrescine. This chain is S-adenosylmethionine decarboxylase proenzyme, found in Pseudomonas syringae pv. syringae (strain B728a).